The following is a 344-amino-acid chain: Trace amine-associated receptor 8c (344 aa).

The Extracellular segment spans residues 1–31; that stretch reads MTSNFSQPALQLCYENTNGSCIKTPYSPGPR. Residues asparagine 4 and asparagine 18 are each glycosylated (N-linked (GlcNAc...) asparagine). 2 disulfides stabilise this stretch: cysteine 21-cysteine 185 and cysteine 104-cysteine 189. A helical membrane pass occupies residues 32-52; sequence VILYMVYGFGAVLAVCGNLLV. Residues 53 to 67 are Cytoplasmic-facing; sequence VISVLHFKQLHSPAN. A helical transmembrane segment spans residues 68 to 88; that stretch reads FLIASLASADFLVGISVMPFS. Over 89–111 the chain is Extracellular; the sequence is MVRSIESCWYFGDAFCSLHSCCD. The helical transmembrane segment at 112–132 threads the bilayer; it reads VAFCYSSALHLCFISVDRYIA. Residues 133-146 lie on the Cytoplasmic side of the membrane; that stretch reads VTDPLVYPTKFTVS. Residues 147 to 167 traverse the membrane as a helical segment; the sequence is VSGICISISWILPLVYSSAVF. Over 168-195 the chain is Extracellular; that stretch reads YTGISAKGIESLVSALNCVGGCQVVVNQ. The chain crosses the membrane as a helical span at residues 196-216; the sequence is DWVLISFLLFFIPTVVMIILY. Residues 217–260 lie on the Cytoplasmic side of the membrane; sequence SKIFLVAKQQAVKIETSVSGNRGESSSESHKARVAKRERKAAKT. A helical membrane pass occupies residues 261–281; sequence LGVTVVAFMVSWLPYTIDALV. Position 282 (aspartate 282) is a topological domain, extracellular. Residues 283–303 traverse the membrane as a helical segment; it reads AFMGFITPAYVYEICCWSAYY. At 304-344 the chain is on the cytoplasmic side; the sequence is NSAMNPLIYAFFYPWFRKAIKLILSGKILKGHSSTTNLFSE.

Belongs to the G-protein coupled receptor 1 family. In terms of tissue distribution, specifically expressed in neurons of the olfactory epithelium.

The protein resides in the cell membrane. In terms of biological role, olfactory receptor specific for trace amines, such ascyclohexylamine (1-MPD). Trace amine compounds are enriched in animal body fluids and act on trace amine-associated receptors (TAARs) to elicit both intraspecific and interspecific innate behaviors. Ligand-binding causes a conformation change that triggers signaling via G(s)-class of G alpha proteins (GNAL or GNAS). This Mus musculus (Mouse) protein is Trace amine-associated receptor 8c.